Here is a 384-residue protein sequence, read N- to C-terminus: Class V chitinase CHIT5a (384 aa).

Residues 1-27 (MAVQKIIITPILVFLVTIFFNVSSSSS) form the signal peptide. Asn-29, Asn-114, and Asn-133 each carry an N-linked (GlcNAc...) asparagine glycan. The region spanning 39–384 (GVRSAYWPAG…SKQASNAWGH (346 aa)) is the GH18 domain. Glu-152 functions as the Proton donor in the catalytic mechanism. Asn-195 and Asn-234 each carry an N-linked (GlcNAc...) asparagine glycan.

The protein belongs to the glycosyl hydrolase 18 family. Chitinase class V subfamily.

It carries out the reaction Random endo-hydrolysis of N-acetyl-beta-D-glucosaminide (1-&gt;4)-beta-linkages in chitin and chitodextrins.. It participates in glycan degradation; chitin degradation. Possesses chitinase activity in vitro toward glycol chitin, carboxymethyl-chitin, colloidal chitin, and the chitin oligosaccharides (N-acetylglucosamine) (GlcNAc)6 and (GlcNAc)5. Hydrolyzes (GlcNAc)6 into (GlcNAc)4 and (GlcNAc)2, or two (GlcNAc)3 molecules. Has the capacity to inhibit hyphal growth of the fungus Trichoderma viride in an agar-plate bioassay. The chain is Class V chitinase CHIT5a from Medicago truncatula (Barrel medic).